The following is a 325-amino-acid chain: NADH-quinone oxidoreductase subunit H (325 aa).

8 helical membrane passes run 11 to 31 (ILISVLKAVVILLVVVTCGAF), 81 to 101 (AIFTLAPVIAFTSLLLSFAIV), 114 to 134 (IGILFFLMMAGLAVYAVLFAG), 154 to 174 (LSYEVFLGLSLMGVVAQAGSF), 186 to 206 (VWNVIPQFFGFVTFAIAGVAV), 237 to 257 (FFVGEYIGIVTVSALIVTLFF), 265 to 285 (LPPFIWFALKTAFFMVMFILI), and 304 to 324 (VCLPLTLLNLLATAAVILYNA).

Belongs to the complex I subunit 1 family. NDH-1 is composed of 13 different subunits. Subunits NuoA, H, J, K, L, M, N constitute the membrane sector of the complex.

The protein resides in the cell inner membrane. It carries out the reaction a quinone + NADH + 5 H(+)(in) = a quinol + NAD(+) + 4 H(+)(out). In terms of biological role, NDH-1 shuttles electrons from NADH, via FMN and iron-sulfur (Fe-S) centers, to quinones in the respiratory chain. The immediate electron acceptor for the enzyme in this species is believed to be ubiquinone. Couples the redox reaction to proton translocation (for every two electrons transferred, four hydrogen ions are translocated across the cytoplasmic membrane), and thus conserves the redox energy in a proton gradient. This subunit may bind ubiquinone. The sequence is that of NADH-quinone oxidoreductase subunit H from Yersinia enterocolitica serotype O:8 / biotype 1B (strain NCTC 13174 / 8081).